We begin with the raw amino-acid sequence, 805 residues long: Mitochondrial inner membrane m-AAA protease component AFG3L2 (805 aa).

The N-terminal 39 residues, 1–39 (MAHRCLLLWGRGACRPRGMPPMLLPGGRTGSTERLYLRM), are a transit peptide targeting the mitochondrion. Residues 40–67 (LYRYATTQAKTSRNSLLTDVIAAYQRLC) constitute a propeptide, removed in mature form. The interval 74 to 127 (FEKYFPNGKNGKKTSEPKEVMGEKKEPKPAAAPRPSGGGVGGGGKRGGKKDDSH) is disordered. Residues 86–101 (KTSEPKEVMGEKKEPK) are compositionally biased toward basic and acidic residues. The span at 109–118 (SGGGVGGGGK) shows a compositional bias: gly residues. Lysine 118 carries the N6-succinyllysine modification. 2 consecutive transmembrane segments (helical) span residues 144–164 (FKMY…YFLF) and 252–272 (GSFL…LYTI). 8 residues coordinate ATP: valine 311, alanine 312, threonine 353, glycine 354, lysine 355, threonine 356, leucine 357, and histidine 491. Histidine 575 serves as a coordination point for Zn(2+). Residue glutamate 576 is part of the active site. Positions 579 and 650 each coordinate Zn(2+). Residues 760 to 805 (FVEGTGSLDEDTSLPEGLKDWNREREGSEEPSGEKVTSPVQGAGPA) form a disordered region. Over residues 776–787 (GLKDWNREREGS) the composition is skewed to basic and acidic residues.

This sequence in the N-terminal section; belongs to the AAA ATPase family. In the C-terminal section; belongs to the peptidase M41 family. In terms of assembly, homohexamer. Forms heterohexamers with SPG7. The m-AAA protease is either composed of homohexamers of AFG3L2 or heterohexamers of AFG3L2 and SPG7. Interacts with MAIP1. Interacts with DNAJC19. Interacts with PHB2. Requires Zn(2+) as cofactor. In terms of processing, upon import into the mitochondrion, the N-terminal transit peptide is cleaved to generate an intermediate form which undergoes autocatalytic proteolytic processing to generate the proteolytically active mature form.

It localises to the mitochondrion inner membrane. The enzyme catalyses ATP + H2O = ADP + phosphate + H(+). In terms of biological role, catalytic component of the m-AAA protease, a protease that plays a key role in proteostasis of inner mitochondrial membrane proteins, and which is essential for axonal and neuron development. AFG3L2 possesses both ATPase and protease activities: the ATPase activity is required to unfold substrates, threading them into the internal proteolytic cavity for hydrolysis into small peptide fragments. The m-AAA protease carries out protein quality control in the inner membrane of the mitochondria by mediating degradation of mistranslated or misfolded polypeptides. The m-AAA protease complex also promotes the processing and maturation of mitochondrial proteins, such as MRPL32/bL32m, PINK1 and SP7. Mediates protein maturation of the mitochondrial ribosomal subunit MRPL32/bL32m by catalyzing the cleavage of the presequence of MRPL32/bL32m prior to assembly into the mitochondrial ribosome. Required for SPG7 maturation into its active mature form after SPG7 cleavage by mitochondrial-processing peptidase (MPP). Required for the maturation of PINK1 into its 52kDa mature form after its cleavage by mitochondrial-processing peptidase (MPP). Acts as a regulator of calcium in neurons by mediating degradation of SMDT1/EMRE before its assembly with the uniporter complex, limiting the availability of SMDT1/EMRE for MCU assembly and promoting efficient assembly of gatekeeper subunits with MCU. Promotes the proteolytic degradation of GHITM upon hyperpolarization of mitochondria: progressive GHITM degradation leads to respiratory complex I degradation and broad reshaping of the mitochondrial proteome by AFG3L2. Also acts as a regulator of mitochondrial glutathione homeostasis by mediating cleavage and degradation of SLC25A39. SLC25A39 cleavage is prevented when SLC25A39 binds iron-sulfur. Involved in the regulation of OMA1-dependent processing of OPA1. May act by mediating processing of OMA1 precursor, participating in OMA1 maturation. This chain is Mitochondrial inner membrane m-AAA protease component AFG3L2 (AFG3L2), found in Bos taurus (Bovine).